The following is a 130-amino-acid chain: MYIGICICVLLAALSASSTGQQTVGSMNEDPGAREIEQQNILQHPRHIRASSSAQLKPFQRIDGTSDQKAVIGAMLAKYLQTRKAGSSTGRYAVLPNRPVIDPTHRINDRDYMGWMDFGRRSAEEYEYSS.

Positions 1 to 20 (MYIGICICVLLAALSASSTG) are cleaved as a signal peptide. The propeptide occupies 21 to 60 (QQTVGSMNEDPGAREIEQQNILQHPRHIRASSSAQLKPFQ). Sulfotyrosine is present on Tyr-112. Phe-118 carries the phenylalanine amide modification. Residues 122-130 (SAEEYEYSS) constitute a propeptide that is removed on maturation. Tyr-126 and Tyr-128 each carry sulfotyrosine.

This sequence belongs to the gastrin/cholecystokinin family. The precursor is cleaved by proteases to produce a number of active cholecystokinins. Expressed in brain, lung, testis and throughout the length of the small intestine. In the brain, expressed predominantly in the optic tectum and brain stem.

The protein resides in the secreted. Functionally, this peptide hormone induces gall bladder contraction and the release of pancreatic enzymes in the gut. Its function in the brain is not clear. This is Cholecystokinin (CCK) from Aquarana catesbeiana (American bullfrog).